The sequence spans 527 residues: Probable bifunctional tRNA threonylcarbamoyladenosine biosynthesis protein (527 aa).

The segment at 1–323 (MPDIMPDDGL…YRADEVEVAW (323 aa)) is kae1. Residues His110, His114, and Tyr131 each contribute to the Fe cation site. Residues 131–135 (YASGA), Asp163, Gly176, Glu180, and Asn256 each bind L-threonylcarbamoyladenylate. Residue Asp284 participates in Fe cation binding. A Protein kinase domain is found at 333-527 (IGPHEGGVAR…HEVELRGRYL (195 aa)). Residues 340 to 348 (VARGAEAVV) and Lys357 contribute to the ATP site. The Proton acceptor; for kinase activity role is filled by Asp444.

The protein in the N-terminal section; belongs to the KAE1 / TsaD family. This sequence in the C-terminal section; belongs to the protein kinase superfamily. Tyr protein kinase family. BUD32 subfamily. In terms of assembly, component of the KEOPS complex that consists of Kae1, Bud32, Cgi121 and Pcc1; the whole complex dimerizes. The cofactor is Fe(2+).

It is found in the cytoplasm. It catalyses the reaction L-seryl-[protein] + ATP = O-phospho-L-seryl-[protein] + ADP + H(+). The enzyme catalyses L-threonyl-[protein] + ATP = O-phospho-L-threonyl-[protein] + ADP + H(+). The catalysed reaction is L-threonylcarbamoyladenylate + adenosine(37) in tRNA = N(6)-L-threonylcarbamoyladenosine(37) in tRNA + AMP + H(+). In terms of biological role, required for the formation of a threonylcarbamoyl group on adenosine at position 37 (t(6)A37) in tRNAs that read codons beginning with adenine. Is a component of the KEOPS complex that is probably involved in the transfer of the threonylcarbamoyl moiety of threonylcarbamoyl-AMP (TC-AMP) to the N6 group of A37. The Kae1 domain likely plays a direct catalytic role in this reaction. The Bud32 domain probably displays kinase activity that regulates Kae1 function. The polypeptide is Probable bifunctional tRNA threonylcarbamoyladenosine biosynthesis protein (Methanoculleus marisnigri (strain ATCC 35101 / DSM 1498 / JR1)).